Consider the following 151-residue polypeptide: Phosphoribosyl-AMP cyclohydrolase (151 aa).

Asp94 serves as a coordination point for Mg(2+). Residue Cys95 participates in Zn(2+) binding. Mg(2+) contacts are provided by Asp96 and Asp98. The Zn(2+) site is built by Cys112 and Cys119.

It belongs to the PRA-CH family. Homodimer. It depends on Mg(2+) as a cofactor. Zn(2+) is required as a cofactor.

The protein localises to the cytoplasm. The enzyme catalyses 1-(5-phospho-beta-D-ribosyl)-5'-AMP + H2O = 1-(5-phospho-beta-D-ribosyl)-5-[(5-phospho-beta-D-ribosylamino)methylideneamino]imidazole-4-carboxamide. The protein operates within amino-acid biosynthesis; L-histidine biosynthesis; L-histidine from 5-phospho-alpha-D-ribose 1-diphosphate: step 3/9. Its function is as follows. Catalyzes the hydrolysis of the adenine ring of phosphoribosyl-AMP. This is Phosphoribosyl-AMP cyclohydrolase from Rhodopseudomonas palustris (strain ATCC BAA-98 / CGA009).